Here is a 242-residue protein sequence, read N- to C-terminus: Prosalusin (242 aa).

An N-terminal signal peptide occupies residues 1–26 (MAAATRGCRPWGSLLGLLGLVSAAAA). A propeptide spanning residues 27–189 (AWDLASLRCT…SSWVVYGTNY (163 aa)) is cleaved from the precursor. 93 to 100 (GWTGTGKS) serves as a coordination point for ATP. A glycan (N-linked (GlcNAc...) asparagine) is linked at asparagine 149. Positions 210–242 (PPRRSGALPPAPAAPRPALRAQRAGPAGPGAKG) are disordered. The span at 225-235 (RPALRAQRAGP) shows a compositional bias: low complexity. Lysine 241 bears the Lysine amide mark.

It belongs to the ClpA/ClpB family. Torsin subfamily. Amidation of salusin-alpha(29-Gly) by peptidylglycine alpha-amidating monooxygenase, PAM, converts Lys-241-Gly-242 to Lys-241-NH2 and gives raise to salusin-alpha. In terms of tissue distribution, isoform 4 is ubiquitously expressed, with high level in vascular endothelial cells and vascular smooth muscle cells.

It localises to the secreted. Functionally, salusins -alpha and -beta may be endocrine and/or paracrine factors able to increase intracellular calcium concentrations and induce cell mitogenesis. Salusins may also be potent hypotensive peptides. The chain is Prosalusin (TOR2A) from Homo sapiens (Human).